Consider the following 339-residue polypeptide: Uroporphyrinogen decarboxylase (339 aa).

Substrate contacts are provided by residues 21–25, aspartate 71, tyrosine 147, serine 202, and histidine 315; that span reads RQAGR.

This sequence belongs to the uroporphyrinogen decarboxylase family. As to quaternary structure, homodimer.

It localises to the cytoplasm. The enzyme catalyses uroporphyrinogen III + 4 H(+) = coproporphyrinogen III + 4 CO2. It functions in the pathway porphyrin-containing compound metabolism; protoporphyrin-IX biosynthesis; coproporphyrinogen-III from 5-aminolevulinate: step 4/4. Catalyzes the decarboxylation of four acetate groups of uroporphyrinogen-III to yield coproporphyrinogen-III. The chain is Uroporphyrinogen decarboxylase from Helicobacter pylori (strain P12).